The chain runs to 888 residues: MEKKKVWFWGVKDDGEGGGGRGGGRTKDAEDDVADHLSRDGTMSQYSLSKGLLPSLGANNRSSRDVILPRFIVSPFDPRYRAWETFLVFLVLYTAWASPFEFGFLQKPRPPLSILDNIVNGFFAVDIVLTFFVAFLDKVTYLLVDDPKRIAWRYASTWLIFDVVSTFPYEIFGSLLHESIQGYGIFSMLRLWRLRRVSNCFARLEKDRKYSYFWVRCSKLLLVTLFVIHCGACFLYSIAAHYPDPSKTFMALTDENWKESPIAVRYNTAMYWSITTFSTTGYGDIHGVNSREMTFILFYMVFNLGLSAYIIGNMTNLVVHVTGRTRKFRDTIQAASGFGQRNNLPVRLQDQMVAHLCLRYRTDSEGLQQQEIIDSLPKAIRSSISHYLFYEVVDKIYLFHGISNDLLFQLVTEMKAEYFPPKEDVILQNEAPTDFYILVTGAVDIIARVNGVEQVVSEAQRGHVFGEVGVLCYRPQLFTVRTKRLSQLLRLNRTVLLNLVQANVGDGAIIMNNLLQHLKDSEDPVMKGVLADTEHMLAQGKMDLPLSLCFAAARGDDLLLHQLLRRGSSPNEMDKDGRTALHIAASKGSHYCVVLLLEHGADPNIRDSEGNVPLWEAIIGRHREIAKLLAENGAKLSLDSVSYFSGLAVEKNCLDALKDIIKYGGDVTLPDGNGTTALHRAVSEGHLEIVKFLLDQGADLDWPDSYGWTPRGLADHQGNEEIKTLFHNHRPVEKKPKPIPGIPQSPVTGKPLMKYSSEPTMHSGELVLDGGQVVVSQKRKLNNFRNSLFGIISAANSADDGGEVPRSPAVPGGGGSMIYPERVTISSPENGETGGKVVLLPNSMEELLKIGENKMGFVPTKVLTREGAEIDDITLIRDGDFLLLSRDP.

The Cytoplasmic segment spans residues 1–84 (MEKKKVWFWG…PFDPRYRAWE (84 aa)). Residues 10 to 31 (GVKDDGEGGGGRGGGRTKDAED) are disordered. Residues 85–105 (TFLVFLVLYTAWASPFEFGFL) form a helical membrane-spanning segment. Over 106–113 (QKPRPPLS) the chain is Extracellular. The chain crosses the membrane as a helical span at residues 114-134 (ILDNIVNGFFAVDIVLTFFVA). Residues 135 to 155 (FLDKVTYLLVDDPKRIAWRYA) lie on the Cytoplasmic side of the membrane. A helical membrane pass occupies residues 156 to 176 (STWLIFDVVSTFPYEIFGSLL). Residues 177-184 (HESIQGYG) lie on the Extracellular side of the membrane. Residues 185 to 205 (IFSMLRLWRLRRVSNCFARLE) form a helical; Voltage-sensor membrane-spanning segment. The Cytoplasmic segment spans residues 206 to 219 (KDRKYSYFWVRCSK). Residues 220–240 (LLLVTLFVIHCGACFLYSIAA) traverse the membrane as a helical segment. Over 241-267 (HYPDPSKTFMALTDENWKESPIAVRYN) the chain is Extracellular. Residues 268-287 (TAMYWSITTFSTTGYGDIHG) constitute an intramembrane region (pore-forming). Topologically, residues 288–291 (VNSR) are extracellular. A helical membrane pass occupies residues 292 to 312 (EMTFILFYMVFNLGLSAYIIG). Over 313 to 888 (NMTNLVVHVT…GDFLLLSRDP (576 aa)) the chain is Cytoplasmic. Position 398-519 (398-519 (LFHGISNDLL…IMNNLLQHLK (122 aa))) interacts with a nucleoside 3',5'-cyclic phosphate. ANK repeat units lie at residues 543–572 (DLPLSLCFAAARGDDLLLHQLLRRGSSPNE), 576–605 (DGRTALHIAASKGSHYCVVLLLEHGADPNI), 609–638 (EGNVPLWEAIIGRHREIAKLLAENGAKLSL), 640–669 (SVSYFSGLAVEKNCLDALKDIIKYGGDVTL), and 673–702 (NGTTALHRAVSEGHLEIVKFLLDQGADLDW). The region spanning 822-888 (RVTISSPENG…GDFLLLSRDP (67 aa)) is the KHA domain.

It belongs to the potassium channel family. Plant (TC 1.A.1.4) subfamily. As to quaternary structure, the potassium channel is probably composed of a homo- or heterotetrameric complex of pore-forming subunits. Predominantly expressed in flowers; especially in pollen.

Its subcellular location is the membrane. Functionally, highly selective inward-rectifying potassium channel that could mediate potassium uptake in the pollen membrane. Plays an important role in pollen tube development. Assuming opened or closed conformations in response to the voltage difference across the membrane, the channel is activated by hyperpolarization. May interact with the cytoskeleton or with regulatory proteins. This chain is Potassium channel AKT6 (AKT6), found in Arabidopsis thaliana (Mouse-ear cress).